Reading from the N-terminus, the 339-residue chain is Anthranilate phosphoribosyltransferase (339 aa).

Residues G82, 85–86 (GD), T90, 92–95 (NIST), and 110–118 (KHGNRAVSS) each bind 5-phospho-alpha-D-ribose 1-diphosphate. G82 serves as a coordination point for anthranilate. Mg(2+) is bound at residue S94. The anthranilate site is built by N113 and R168. D227 and E228 together coordinate Mg(2+).

Belongs to the anthranilate phosphoribosyltransferase family. In terms of assembly, homodimer. It depends on Mg(2+) as a cofactor.

It catalyses the reaction N-(5-phospho-beta-D-ribosyl)anthranilate + diphosphate = 5-phospho-alpha-D-ribose 1-diphosphate + anthranilate. The protein operates within amino-acid biosynthesis; L-tryptophan biosynthesis; L-tryptophan from chorismate: step 2/5. Catalyzes the transfer of the phosphoribosyl group of 5-phosphorylribose-1-pyrophosphate (PRPP) to anthranilate to yield N-(5'-phosphoribosyl)-anthranilate (PRA). The protein is Anthranilate phosphoribosyltransferase of Clostridium beijerinckii (strain ATCC 51743 / NCIMB 8052) (Clostridium acetobutylicum).